Consider the following 147-residue polypeptide: Large ribosomal subunit protein bL9 (147 aa).

This sequence belongs to the bacterial ribosomal protein bL9 family.

Binds to the 23S rRNA. This is Large ribosomal subunit protein bL9 from Trichlorobacter lovleyi (strain ATCC BAA-1151 / DSM 17278 / SZ) (Geobacter lovleyi).